A 341-amino-acid chain; its full sequence is Dihydroorotate dehydrogenase (quinone) (341 aa).

FMN contacts are provided by residues 59–63 and Thr83; that span reads AGLDK. Lys63 contributes to the substrate binding site. 108–112 is a binding site for substrate; it reads NRMGF. The FMN site is built by Asn136 and Asn169. Asn169 is a substrate binding site. The Nucleophile role is filled by Ser172. Asn174 is a binding site for substrate. Positions 214 and 242 each coordinate FMN. A substrate-binding site is contributed by 243–244; the sequence is NT. FMN is bound by residues Gly265, Gly294, and 315 to 316; that span reads YS.

It belongs to the dihydroorotate dehydrogenase family. Type 2 subfamily. As to quaternary structure, monomer. Requires FMN as cofactor.

Its subcellular location is the cell membrane. It carries out the reaction (S)-dihydroorotate + a quinone = orotate + a quinol. It participates in pyrimidine metabolism; UMP biosynthesis via de novo pathway; orotate from (S)-dihydroorotate (quinone route): step 1/1. In terms of biological role, catalyzes the conversion of dihydroorotate to orotate with quinone as electron acceptor. This is Dihydroorotate dehydrogenase (quinone) from Neisseria meningitidis serogroup C (strain 053442).